We begin with the raw amino-acid sequence, 128 residues long: Small ribosomal subunit protein uS13 (128 aa).

Basic residues predominate over residues G95 to V118. Residues G95 to A128 form a disordered region.

It belongs to the universal ribosomal protein uS13 family. In terms of assembly, part of the 30S ribosomal subunit. Forms a loose heterodimer with protein S19. Forms two bridges to the 50S subunit in the 70S ribosome.

Functionally, located at the top of the head of the 30S subunit, it contacts several helices of the 16S rRNA. In the 70S ribosome it contacts the 23S rRNA (bridge B1a) and protein L5 of the 50S subunit (bridge B1b), connecting the 2 subunits; these bridges are implicated in subunit movement. Contacts the tRNAs in the A and P-sites. The sequence is that of Small ribosomal subunit protein uS13 from Anaeromyxobacter sp. (strain K).